The following is a 356-amino-acid chain: Glutamine synthetase PR-2 (356 aa).

In terms of domain architecture, GS beta-grasp spans 19–99; it reads IIAEYIWVGG…VICDVYTPAG (81 aa). A disordered region spans residues 37 to 66; that stretch reads ARTLPGPVDDPAKLPKWNYDGSSTDQAPGD. Residues 106–356 form the GS catalytic domain; that stretch reads KRYDAAKIFS…IAETTILWKP (251 aa).

This sequence belongs to the glutamine synthetase family. As to quaternary structure, homooctamer. In terms of tissue distribution, roots.

Its subcellular location is the cytoplasm. It carries out the reaction L-glutamate + NH4(+) + ATP = L-glutamine + ADP + phosphate + H(+). In Phaseolus vulgaris (Kidney bean), this protein is Glutamine synthetase PR-2.